Here is a 162-residue protein sequence, read N- to C-terminus: Succinate dehydrogenase assembly factor 2, mitochondrial (162 aa).

Residues 1–35 (MHNMFPALTKTLSLQGYKIINSQTGSAAWSCGRRW) constitute a mitochondrion transit peptide.

This sequence belongs to the SDHAF2 family. In terms of assembly, interacts with the flavoprotein subunit within the SDH catalytic dimer.

The protein resides in the mitochondrion matrix. Plays an essential role in the assembly of succinate dehydrogenase (SDH), an enzyme complex (also referred to as respiratory complex II) that is a component of both the tricarboxylic acid (TCA) cycle and the mitochondrial electron transport chain, and which couples the oxidation of succinate to fumarate with the reduction of ubiquinone (coenzyme Q) to ubiquinol. Required for flavinylation (covalent attachment of FAD) of the flavoprotein subunit of the SDH catalytic dimer. This is Succinate dehydrogenase assembly factor 2, mitochondrial from Saccharomyces cerevisiae (strain RM11-1a) (Baker's yeast).